Consider the following 160-residue polypeptide: Major strawberry allergen Fra a 1-D (160 aa).

The protein belongs to the BetVI family. As to quaternary structure, monomer.

The protein is Major strawberry allergen Fra a 1-D of Fragaria ananassa (Strawberry).